We begin with the raw amino-acid sequence, 91 residues long: UPF0223 protein SACOL1106 (91 aa).

This sequence belongs to the UPF0223 family.

This Staphylococcus aureus (strain COL) protein is UPF0223 protein SACOL1106.